A 153-amino-acid polypeptide reads, in one-letter code: Xanthine-guanine phosphoribosyltransferase (153 aa).

5-phospho-alpha-D-ribose 1-diphosphate contacts are provided by residues 37-38 (RG) and 89-97 (DDLVDTGNT). Aspartate 90 is a binding site for Mg(2+). The guanine site is built by aspartate 93 and isoleucine 136. Positions 93 and 136 each coordinate xanthine. Residues 93 to 97 (DTGNT) and 135 to 136 (WI) each bind GMP.

Belongs to the purine/pyrimidine phosphoribosyltransferase family. XGPT subfamily. Homotetramer. Mg(2+) serves as cofactor.

The protein localises to the cell inner membrane. The catalysed reaction is GMP + diphosphate = guanine + 5-phospho-alpha-D-ribose 1-diphosphate. It catalyses the reaction XMP + diphosphate = xanthine + 5-phospho-alpha-D-ribose 1-diphosphate. It carries out the reaction IMP + diphosphate = hypoxanthine + 5-phospho-alpha-D-ribose 1-diphosphate. The protein operates within purine metabolism; GMP biosynthesis via salvage pathway; GMP from guanine: step 1/1. It functions in the pathway purine metabolism; XMP biosynthesis via salvage pathway; XMP from xanthine: step 1/1. Its function is as follows. Purine salvage pathway enzyme that catalyzes the transfer of the ribosyl-5-phosphate group from 5-phospho-alpha-D-ribose 1-diphosphate (PRPP) to the N9 position of the 6-oxopurines guanine and xanthine to form the corresponding ribonucleotides GMP (guanosine 5'-monophosphate) and XMP (xanthosine 5'-monophosphate), with the release of PPi. To a lesser extent, also acts on hypoxanthine. This Pasteurella multocida (strain Pm70) protein is Xanthine-guanine phosphoribosyltransferase.